The sequence spans 133 residues: ATP synthase epsilon chain, chloroplastic (133 aa).

The protein belongs to the ATPase epsilon chain family. In terms of assembly, F-type ATPases have 2 components, CF(1) - the catalytic core - and CF(0) - the membrane proton channel. CF(1) has five subunits: alpha(3), beta(3), gamma(1), delta(1), epsilon(1). CF(0) has three main subunits: a, b and c.

It is found in the plastid. It localises to the chloroplast thylakoid membrane. Produces ATP from ADP in the presence of a proton gradient across the membrane. The polypeptide is ATP synthase epsilon chain, chloroplastic (Gossypium barbadense (Sea Island cotton)).